Here is a 305-residue protein sequence, read N- to C-terminus: Protoheme IX farnesyltransferase 2 (305 aa).

A run of 8 helical transmembrane segments spans residues 38–58 (LITT…SFLG), 60–80 (INTV…SCAI), 115–135 (ILLV…AAVI), 157–177 (INTV…WTAV), 181–201 (IGVV…PHFL), 227–247 (VTKR…FFLG), 249–269 (LGLP…ILGL), and 285–305 (FVYS…LTLF).

This sequence belongs to the UbiA prenyltransferase family. Protoheme IX farnesyltransferase subfamily. Interacts with CtaA.

It is found in the cell membrane. The enzyme catalyses heme b + (2E,6E)-farnesyl diphosphate + H2O = Fe(II)-heme o + diphosphate. The protein operates within porphyrin-containing compound metabolism; heme O biosynthesis; heme O from protoheme: step 1/1. Functionally, converts heme B (protoheme IX) to heme O by substitution of the vinyl group on carbon 2 of heme B porphyrin ring with a hydroxyethyl farnesyl side group. The chain is Protoheme IX farnesyltransferase 2 (ctaB2) from Bacillus subtilis (strain 168).